We begin with the raw amino-acid sequence, 349 residues long: Anthranilate phosphoribosyltransferase (349 aa).

5-phospho-alpha-D-ribose 1-diphosphate-binding positions include G82, 85 to 86 (GD), 92 to 95 (NVST), 110 to 118 (KHGNRGVSS), and S122. G82 serves as a coordination point for anthranilate. S94 provides a ligand contact to Mg(2+). Anthranilate is bound at residue N113. R168 contacts anthranilate. Residues D227 and E228 each contribute to the Mg(2+) site.

This sequence belongs to the anthranilate phosphoribosyltransferase family. As to quaternary structure, homodimer. Mg(2+) is required as a cofactor.

The enzyme catalyses N-(5-phospho-beta-D-ribosyl)anthranilate + diphosphate = 5-phospho-alpha-D-ribose 1-diphosphate + anthranilate. The protein operates within amino-acid biosynthesis; L-tryptophan biosynthesis; L-tryptophan from chorismate: step 2/5. Catalyzes the transfer of the phosphoribosyl group of 5-phosphorylribose-1-pyrophosphate (PRPP) to anthranilate to yield N-(5'-phosphoribosyl)-anthranilate (PRA). The sequence is that of Anthranilate phosphoribosyltransferase from Acinetobacter baumannii (strain SDF).